A 989-amino-acid polypeptide reads, in one-letter code: ATP-dependent 6-phosphofructokinase subunit alpha (989 aa).

Residues 1-585 (MPEPSISALS…SYESFLSVSK (585 aa)) are N-terminal catalytic PFK domain 1. ATP contacts are provided by residues Gly220, 283–284 (RS), and 313–316 (GDGS). Asp314 is a binding site for Mg(2+). Beta-D-fructose 6-phosphate contacts are provided by residues 359–361 (SID), Arg396, 403–405 (MGR), Glu460, Arg487, and 493–496 (HVQR). Asp361 functions as the Proton acceptor in the catalytic mechanism. The interdomain linker stretch occupies residues 586–599 (YDDGSYLVPESSRL). The segment at 600–989 (NIAIIHVGAP…LSGRLSIRTT (390 aa)) is C-terminal regulatory PFK domain 2. Beta-D-fructose 2,6-bisphosphate contacts are provided by residues Arg670, 727-731 (TVSNN), Arg765, 772-774 (QGG), Glu832, Arg858, 864-867 (HVQQ), and Arg963.

It belongs to the phosphofructokinase type A (PFKA) family. ATP-dependent PFK group I subfamily. Eukaryotic two domain clade 'E' sub-subfamily. As to quaternary structure, heterododecamer of 4 alpha, 4 beta and 4 gamma chains. The gamma chain bridges the N-terminal halves of the alpha and beta subunits. Mg(2+) serves as cofactor.

Its subcellular location is the cytoplasm. It catalyses the reaction beta-D-fructose 6-phosphate + ATP = beta-D-fructose 1,6-bisphosphate + ADP + H(+). Its pathway is carbohydrate degradation; glycolysis; D-glyceraldehyde 3-phosphate and glycerone phosphate from D-glucose: step 3/4. Its activity is regulated as follows. Allosterically activated by ADP, AMP, or fructose 2,6-bisphosphate, and allosterically inhibited by ATP or citrate. In terms of biological role, catalyzes the phosphorylation of D-fructose 6-phosphate to fructose 1,6-bisphosphate by ATP, the first committing step of glycolysis. Involved in the modulation of glucose-induced microautophagy of peroxisomes independent of its ability to metabolize glucose intermediates. The chain is ATP-dependent 6-phosphofructokinase subunit alpha (PFK1) from Komagataella phaffii (strain GS115 / ATCC 20864) (Yeast).